A 410-amino-acid chain; its full sequence is uncharacterized protein (410 aa).

Position 11–39 (11–39 (VLVIGGGPSGTALSAELAARGLDVQQLAP)) interacts with NAD(+).

The protein belongs to the lycopene cyclase family.

This is an uncharacterized protein from Deinococcus radiodurans (strain ATCC 13939 / DSM 20539 / JCM 16871 / CCUG 27074 / LMG 4051 / NBRC 15346 / NCIMB 9279 / VKM B-1422 / R1).